The sequence spans 171 residues: MEPDNSPRKIQFTVPLLEPHLDPEAAEQIRRRRPTPATLVLTSDQSSPEVDEDRIPNPLLKSTLSMSPRQRKKMTRTTPTMKELQTMVEHHLGQQKQGEEPEGATESTGNQESCPPGIPDTGSASRPDTSGTAQKPAESKPKTQEQRGVEPSTEDLSAHMLPLDSQGASLV.

Met-1 bears the N-acetylmethionine mark. The tract at residues 9-12 (KIQF) is essential for activity. The disordered stretch occupies residues 17–171 (LEPHLDPEAA…PLDSQGASLV (155 aa)). The segment covering 19 to 29 (PHLDPEAAEQI) has biased composition (basic and acidic residues). The residue at position 35 (Thr-35) is a Phosphothreonine; by PKA. The essential for activity stretch occupies residues 42 to 54 (TSDQSSPEVDEDR). Ser-43, Ser-46, Ser-47, and Ser-67 each carry phosphoserine. Over residues 122–133 (GSASRPDTSGTA) the composition is skewed to polar residues. Residues 137–148 (AESKPKTQEQRG) are compositionally biased toward basic and acidic residues. Residues 143-171 (TQEQRGVEPSTEDLSAHMLPLDSQGASLV) are interaction with PPP1R15A.

It belongs to the protein phosphatase inhibitor 1 family. Interacts with PPP1R15A. In terms of processing, phosphorylation of Thr-35 is required for activity.

Its function is as follows. Inhibitor of protein-phosphatase 1. This protein may be important in hormonal control of glycogen metabolism. Hormones that elevate intracellular cAMP increase I-1 activity in many tissues. I-1 activation may impose cAMP control over proteins that are not directly phosphorylated by PKA. Following a rise in intracellular calcium, I-1 is inactivated by calcineurin (or PP2B). Does not inhibit type-2 phosphatases. This Rattus norvegicus (Rat) protein is Protein phosphatase 1 regulatory subunit 1A (Ppp1r1a).